The primary structure comprises 800 residues: U4/U6.U5 tri-snRNP-associated protein 1 (800 aa).

The tract at residues 1–120 is disordered; the sequence is MGSSKKHRGE…SSGDASSLSI (120 aa). A compositionally biased stretch (basic residues) spans 32–42; that stretch reads HREHKKHKHRS. Over residues 58-101 the composition is skewed to basic and acidic residues; sequence ERGGERGSGRRGAEAEARSSTHGRERSQAEPSERRVKREKRDDG. Positions 104 to 119 are enriched in low complexity; the sequence is AAASSKTSSGDASSLS. Residues lysine 125 and lysine 133 each participate in a glycyl lysine isopeptide (Lys-Gly) (interchain with G-Cter in SUMO2) cross-link. Residue lysine 141 forms a Glycyl lysine isopeptide (Lys-Gly) (interchain with G-Cter in SUMO1); alternate linkage. A Glycyl lysine isopeptide (Lys-Gly) (interchain with G-Cter in SUMO2); alternate cross-link involves residue lysine 141. Glycyl lysine isopeptide (Lys-Gly) (interchain with G-Cter in SUMO2) cross-links involve residues lysine 147 and lysine 188. Residues 157 to 231 are a coiled coil; sequence NPMALRQREE…KLLEEMDQEF (75 aa). Phosphothreonine is present on threonine 189. Lysine 277 participates in a covalent cross-link: Glycyl lysine isopeptide (Lys-Gly) (interchain with G-Cter in SUMO2). Residues 311–330 are disordered; that stretch reads PDYLPYAEDESVDDLAQQKP. Residue serine 321 is modified to Phosphoserine. Glycyl lysine isopeptide (Lys-Gly) (interchain with G-Cter in SUMO2) cross-links involve residues lysine 329 and lysine 336. Phosphoserine is present on serine 348. Threonine 392 is modified (phosphothreonine). Residues lysine 400 and lysine 414 each participate in a glycyl lysine isopeptide (Lys-Gly) (interchain with G-Cter in SUMO2) cross-link. The interval 419 to 497 is disordered; it reads RADDLLPLGD…QVLEEDEAEL (79 aa). A Phosphothreonine modification is found at threonine 430. A phosphoserine mark is found at serine 448, serine 474, serine 486, and serine 521. The stretch at 490–533 forms a coiled coil; the sequence is LEEDEAELELQKQLEKGRRLRQLQQLQQLRDSGEKVVEIVKKLE. A Glycyl lysine isopeptide (Lys-Gly) (interchain with G-Cter in SUMO2) cross-link involves residue lysine 548. The tract at residues 571–604 is disordered; sequence LAGNREEQEELMDFERDEERSANGGSESDGEENI. A phosphoserine mark is found at serine 591, serine 596, serine 598, and serine 621. Glycyl lysine isopeptide (Lys-Gly) (interchain with G-Cter in SUMO2) cross-links involve residues lysine 648, lysine 657, and lysine 684. At threonine 695 the chain carries Phosphothreonine. Residues lysine 699, lysine 709, lysine 723, lysine 749, and lysine 758 each participate in a glycyl lysine isopeptide (Lys-Gly) (interchain with G-Cter in SUMO2) cross-link. Serine 761 is subject to Phosphoserine. The residue at position 764 (threonine 764) is a Phosphothreonine. Glycyl lysine isopeptide (Lys-Gly) (interchain with G-Cter in SUMO2) cross-links involve residues lysine 775 and lysine 780. At serine 789 the chain carries Phosphoserine. Lysine 791 is covalently cross-linked (Glycyl lysine isopeptide (Lys-Gly) (interchain with G-Cter in SUMO2)).

Belongs to the SNU66/SART1 family. Identified in the spliceosome C complex. Component of the U4/U6-U5 tri-snRNP complex composed of the U4, U6 and U5 snRNAs and at least PRPF3, PRPF4, PRPF6, PRPF8, PRPF31, SNRNP200, TXNL4A, SNRNP40, DDX23, CD2BP2, PPIH, SNU13, EFTUD2, SART1 and USP39. Interacts with UBL5. Interacts with IVNS1ABP (via Kelch repeats). Sumoylated with SUMO2. Ubiquitously expressed.

It localises to the nucleus. Its function is as follows. Plays a role in mRNA splicing as a component of the U4/U6-U5 tri-snRNP, one of the building blocks of the spliceosome. May also bind to DNA. This is U4/U6.U5 tri-snRNP-associated protein 1 (SART1) from Homo sapiens (Human).